We begin with the raw amino-acid sequence, 308 residues long: MDMLHTILNFLLPPLTISFLVLFYPFYLFTKLMSCLKHLHFENVTGKVVLITGASSGIGEHVAYEYAKKGAKLALVARRKDRLEIVAETSRQLGSGDVIIIPGDVSNVEDCKKFIDETIHHFGKLDHLINNAGVPQTVIFEDFTQIQDANSIMDINFWGSTYITYFAIPHLRKSKGKIVVISSATAIIPLQAASVYSASKAALVKFFETLRVEISPDIKITIALPGFISTDMTTPQFKEMYGSDFILSESVSRCAKAIFRGIGRGEAYVIEPSWIKWIFLIKNVCPEIVDYLLDYIFVSYLKPYFKRD.

A helical; Signal-anchor for type II membrane protein membrane pass occupies residues 10–30 (FLLPPLTISFLVLFYPFYLFT). NADP(+) contacts are provided by residues 53–79 (GASS…VARR) and D104. S183 is a binding site for substrate. Residue Y196 is the Proton acceptor of the active site. Residues 196–200 (YSASK) and K200 each bind NADP(+).

Belongs to the short-chain dehydrogenases/reductases (SDR) family.

The protein resides in the membrane. This chain is 11-beta-hydroxysteroid dehydrogenase-like 2 (HSD2), found in Arabidopsis thaliana (Mouse-ear cress).